The sequence spans 190 residues: Ras-related protein RabF1 (190 aa).

A GTP-binding site is contributed by 15-22; it reads GDSGVGKT. The Effector region signature appears at 37 to 44; the sequence is HITIGIEF. Residues 62-66 and 119-122 contribute to the GTP site; these read DTAGE and NKND. Position 187 is a cysteine methyl ester (C187). Residue C187 is the site of S-geranylgeranyl cysteine attachment. Residues 188–190 constitute a propeptide, removed in mature form; that stretch reads IIN.

The protein belongs to the small GTPase superfamily. Rab family.

It is found in the cell membrane. The sequence is that of Ras-related protein RabF1 (rabF1-1) from Dictyostelium discoideum (Social amoeba).